The following is a 633-amino-acid chain: Probable potassium transport system protein Kup (633 aa).

12 helical membrane-spanning segments follow: residues 19–39 (LGML…SPLY), 61–81 (ILAL…VLFI), 112–132 (VLVI…MITP), 148–168 (SGLE…LFLI), 179–199 (LFGP…INGI), 217–237 (FFIV…LALT), 258–278 (WFAL…ALLL), 290–310 (LLAP…ATVI), 348–368 (IYIG…VLGF), 380–400 (VAVT…MLLL), 405–425 (PVLA…FFAA), and 430–450 (IFQG…LMTT).

The protein belongs to the HAK/KUP transporter (TC 2.A.72) family.

It is found in the cell inner membrane. It catalyses the reaction K(+)(in) + H(+)(in) = K(+)(out) + H(+)(out). Transport of potassium into the cell. Likely operates as a K(+):H(+) symporter. This is Probable potassium transport system protein Kup from Pseudomonas fluorescens (strain ATCC BAA-477 / NRRL B-23932 / Pf-5).